Here is a 378-residue protein sequence, read N- to C-terminus: Mating-type protein MAT-1 (378 aa).

Residues 60–117 (KARKALNAFVGFRCYYITIPMFKPWPMKKLSNLIGLLWEADPNKSLWSLMAKPWSTIR) constitute a DNA-binding region (alpha box).

Belongs to the MATALPHA1 family.

It is found in the nucleus. Functionally, mating type proteins are sequence specific DNA-binding proteins that act as master switches in fungal differentiation by controlling gene expression in a cell type-specific fashion. Transcriptional activator that induces the transcription of alpha-specific genes. This is Mating-type protein MAT-1 (MAT1) from Cochliobolus sativus (Common root rot and spot blotch fungus).